Consider the following 76-residue polypeptide: DNA gyrase inhibitor YacG (76 aa).

Zn(2+) contacts are provided by Cys20, Cys23, Cys39, and Cys43. The interval 54-76 is disordered; the sequence is EEKSIPGAPDLSDSDGWSDDMGY. The segment covering 65–76 has biased composition (acidic residues); the sequence is SDSDGWSDDMGY.

This sequence belongs to the DNA gyrase inhibitor YacG family. Interacts with GyrB. Requires Zn(2+) as cofactor.

In terms of biological role, inhibits all the catalytic activities of DNA gyrase by preventing its interaction with DNA. Acts by binding directly to the C-terminal domain of GyrB, which probably disrupts DNA binding by the gyrase. The polypeptide is DNA gyrase inhibitor YacG (Photobacterium profundum (strain SS9)).